A 602-amino-acid chain; its full sequence is UvrABC system protein C (602 aa).

In terms of domain architecture, GIY-YIG spans 17–94; it reads TTSGCYKMYS…IKEHKPDYNI (78 aa). One can recognise a UVR domain in the interval 199 to 234; it reads SKLLDEIEIKMKEVIKREDFESAIKLKETKRSLIEI.

The protein belongs to the UvrC family. As to quaternary structure, interacts with UvrB in an incision complex.

It is found in the cytoplasm. In terms of biological role, the UvrABC repair system catalyzes the recognition and processing of DNA lesions. UvrC both incises the 5' and 3' sides of the lesion. The N-terminal half is responsible for the 3' incision and the C-terminal half is responsible for the 5' incision. The chain is UvrABC system protein C from Borrelia turicatae (strain 91E135).